Here is a 108-residue protein sequence, read N- to C-terminus: Cytochrome bo(3) ubiquinol oxidase subunit 4 (108 aa).

Residues 1–16 (MNKYKKIKNNFDKEKK) are Cytoplasmic-facing. A helical membrane pass occupies residues 17 to 37 (SYIVGFLFSLFLTIIPFFCTL). The Extracellular segment spans residues 38–46 (NHLFSRKIN). A helical membrane pass occupies residues 47–67 (FFVILLCALSQIIIHFIYFLH). Residues 68 to 77 (LDFSKKNSWN) are Cytoplasmic-facing. Residues 78 to 98 (IISLLFILIIVFIIVFGSIWI) form a helical membrane-spanning segment. Residues 99–108 (MYNLNHHVIL) lie on the Extracellular side of the membrane.

Belongs to the cytochrome c oxidase bacterial subunit 4 family. Heterooctamer of two A chains, two B chains, two C chains and two D chains.

It localises to the cell membrane. Functionally, cytochrome bo(3) ubiquinol terminal oxidase is the component of the aerobic respiratory chain of E.coli that predominates when cells are grown at high aeration. Has proton pump activity across the membrane in addition to electron transfer, pumping 2 protons/electron. The protein is Cytochrome bo(3) ubiquinol oxidase subunit 4 (cyoD) of Buchnera aphidicola subsp. Schizaphis graminum (strain Sg).